An 89-amino-acid chain; its full sequence is MYSIDITLKLSPIPISVQRKEEAAADALYQTIINAMRSPNPELLELTCEKQTDKKVAVLSDQISAVIVSQKSGAASTGRAPGFVALATE.

Belongs to the UPF0367 family.

The polypeptide is UPF0367 protein MAE_19160 (Microcystis aeruginosa (strain NIES-843 / IAM M-2473)).